The sequence spans 829 residues: Protein Jade-1 (829 aa).

A compositionally biased stretch (polar residues) spans 1 to 10 (MKRSRVPSTS). The segment at 1–40 (MKRSRVPSTSEDSDNGSNSTSWSQHSNSKHRKQSGKRPSE) is disordered. A compositionally biased stretch (low complexity) spans 15-26 (NGSNSTSWSQHS). A PHD-type 1 zinc finger spans residues 196-246 (DVVCDVCQSPDGEDGNEMVFCDKCNICVHQACYGILKVPEGSWLCRTCALG). The segment at 248-282 (FPKCHLCPKKGGAMKPTRSGTKWVHVSCALWIPEV) adopts a C2HC pre-PHD-type zinc-finger fold. Residues 306 to 362 (LICCLCKEKTGACIQCSAKSCRVAFHVTCGLHCGLKMNTILTEADEVKFKSFCPKHS) form a PHD-type 2 zinc finger. Disordered stretches follow at residues 368-408 (EEEG…PEET), 556-651 (PPVP…RRKS), and 697-829 (ATAP…VLAS). A compositionally biased stretch (basic and acidic residues) spans 374-390 (DRPVKVPTREDRSRNRG). Polar residues-rich tracts occupy residues 394–405 (SASSQTRLSQNP), 570–586 (GQNSTLSSSEKGSNSYR), and 607–619 (SGDSVRSETVMSA). A compositionally biased stretch (basic and acidic residues) spans 622-648 (RRSEGRTRSGESHRKEEESERPLEDRR). A compositionally biased stretch (polar residues) spans 697-714 (ATAPNMYSGSPRKTNASH). Residues 738-754 (KRSERTSAGRQTERQEA) show a composition bias toward basic and acidic residues. The span at 762–774 (SSLKTFSTSPSSP) shows a compositional bias: low complexity. Positions 782–792 (TGSENRRHLEE) are enriched in basic and acidic residues.

This sequence belongs to the JADE family. Component of the HBO1 complex composed.

The protein resides in the nucleus. Its subcellular location is the chromosome. It localises to the cytoplasm. The protein localises to the cytoskeleton. It is found in the cilium basal body. In terms of biological role, scaffold subunit of some HBO1 complexes, which have a histone H4 acetyltransferase activity. Plays a key role in HBO1 complex by directing KAT7/HBO1 specificity towards histone H4 acetylation (H4K5ac, H4K8ac and H4K12ac), regulating DNA replication initiation, regulating DNA replication initiation. This is Protein Jade-1 (jade1) from Danio rerio (Zebrafish).